Consider the following 1325-residue polypeptide: MHTFTRKVKWPFMFTAIGLTFGIVAVACAQPTASTVEGLFKPSSAFADRTDFSLSSILQKSLINRESFNQYLAMRLAPVLRTFYEDNYDTDIKERLNGFTADTDNAFVSQEQNLRNQFRENYLVHLQTDIFDNTGGNQAAWKLRDVNNKIIDDFISRIFAKNFVEYVQDGVGPLTKPTKSLIENTSNFKNIKLQPKFVNKNAKLKINNDAVYAAIQDKLLDQFITNENPNLVSRVVFTNETPVDGFDNYFNTKVIQSPTPSYQFQVFNKYNQQSGGTKGANGFNLLASNLKSYKNDQSKGIDIPNKFSSDSGGKLLLKASDMFDTFDPSFSAAFIQGYLALQKKSKGADSKEVDSLIKDKSIIENFFVDNNTQAAAAARAASSSSEGTIQLKTASDGGGTTQSTVHKTDLVKIFGDKDVFAGEYKQQIGNTNANQTGGGGSGGGGGTSTGSSTGSSTETTTGNSSKAVVDLIEVKKDSSSQPDYILSRGKDGIHLMAVDGGSHYLTESGRDVAKQKKFLLFRALQTKYGLVDTDTTYDFKLFDEVKKYFDTNRILFLFEALLDLSSDTNNKDNFLSYPQFKKFADSIKSIEKDLKELVQAHYKQAVFNETAVAENKVTLKLAERNQPFIDNERNNQIEQNGLAAKLPYEQDAKTGHYNDLGNYYKDIIDNVDKKGTSTVKTTSSNTGQTKNFSEEVVSKLKDNKKKVEEAAKKHVEALKVFTIPSPLYSQVILVQTKLSFTPESTSLGLNLALNNYLTSTELQNSIKLSYFQEDEAFKKIIDITNLTFSQQSGGTGGTNGNNNLTADNWKIFKETYLLDLFESQAQKSIFGHVGSSDKNSSTKTGIEGVLDTLYSSLNLEERLDSDDVIDYLSYLYTAHWLLKDNLKNYKQSLQSKLSRTSNAFLVWSVDSEKNKNDSQSTLSSTASSTSNTGLIQLRSVVSLAQNQAAGQGGDNNSDITQTEVKNPNFVFGSSVYDWTNSKTPEVNRAADDTSSFFYTKSSSSSTGAAQSSATVLRSLNQASGMTTKTAKNRYGFRGIVTSSTSGSLPEAVSRRLFKQFVNQTEKGVKVGGQMLITTAKSGKATLVLKQQADDAESTTNNAYKGALFSFGSMDNLKNIINGIQTQTEFDALYNHLTSDLNIDVTGVDKNKTLTEQKTSLTSFVDSNFKQSTQSAQRGDTSARSARSATVQIKKTQEDNQNTNYKDVFSRFDGYIGDNKVEEKNYTSYQFLSDGGKYHATFVKQVNLDDVEKIGTDSLKQEDSSKDKRLNLSLEEFLAAIALEALDPNNQTQAINALISGNKKGLVKVGDFRIFSSISAQWVRRF.

Residues 1–27 (MHTFTRKVKWPFMFTAIGLTFGIVAVA) form the signal peptide. Cys28 carries N-palmitoyl cysteine lipidation. Cys28 carries the S-diacylglycerol cysteine lipid modification. Disordered stretches follow at residues 379–402 (RAAS…GTTQ) and 430–464 (NTNA…TGNS). The segment covering 436-448 (TGGGGSGGGGGTS) has biased composition (gly residues). Low complexity predominate over residues 449-464 (TGSSTGSSTETTTGNS).

It belongs to the MG307/MG309/MG338 family.

It localises to the cell membrane. This is an uncharacterized protein from Mycoplasma pneumoniae (strain ATCC 29342 / M129 / Subtype 1) (Mycoplasmoides pneumoniae).